Here is a 476-residue protein sequence, read N- to C-terminus: TOM1-like protein 1 (476 aa).

A VHS domain is found at alanine 22–proline 154. The interval proline 155–proline 179 is disordered. Positions isoleucine 170–proline 179 are enriched in polar residues. A Phosphoserine modification is found at serine 171. The GAT domain occupies glutamate 200–arginine 288. Polar residues predominate over residues lysine 298 to serine 314. The disordered stretch occupies residues lysine 298–proline 327. Phosphoserine is present on residues serine 314, serine 321, and serine 323. The tract at residues tyrosine 392 to phenylalanine 395 is interaction with GRB2. The short motif at leucine 421–proline 425 is the SH3-binding element. Residues tyrosine 442–methionine 445 are interaction with PIK3R1. Phosphotyrosine is present on tyrosine 460. The SH2-binding motif lies at tyrosine 460 to isoleucine 463.

This sequence belongs to the TOM1 family. Interacts with FYN, GRB2 and PIK3R1 when phosphorylated. Interacts with LYN. Post-translationally, phosphorylated on tyrosines by FYN and LYN.

The protein localises to the golgi apparatus. The protein resides in the golgi stack. Its subcellular location is the endosome membrane. It is found in the cytoplasm. It localises to the membrane. Functionally, probable adapter protein involved in signaling pathways. Interacts with the SH2 and SH3 domains of various signaling proteins when it is phosphorylated. May promote FYN activation, possibly by disrupting intramolecular SH3-dependent interactions. The polypeptide is TOM1-like protein 1 (TOM1L1) (Homo sapiens (Human)).